The primary structure comprises 1644 residues: Kinesin-like protein unc-104 (1644 aa).

A Kinesin motor domain is found at Ser3–Ile351. Gly97–Ser104 contributes to the ATP binding site. A coiled-coil region spans residues Asn358–Glu436. Residues Thr499–Gly565 form the FHA domain. Basic and acidic residues predominate over residues His574–Gly591. The interval His574–Ala598 is disordered. Residues Glu631–Tyr672 adopt a coiled-coil conformation. Disordered regions lie at residues Glu953–Gly985 and His1419–Glu1440. Residues Glu969–Pro984 show a composition bias toward basic and acidic residues. Polar residues predominate over residues Thr1428–Thr1437. The 99-residue stretch at Val1542–Ala1640 folds into the PH domain.

Belongs to the TRAFAC class myosin-kinesin ATPase superfamily. Kinesin family. Unc-104 subfamily. Monomer.

The protein localises to the cytoplasm. Its subcellular location is the cytoskeleton. Required for presynaptic maturation, has a role in axonal transport of dense-core vesicles carrying synaptic vesicle precursors, components required for the morphological transformation of axonal growth cones to mature boutons. This is Kinesin-like protein unc-104 from Aedes aegypti (Yellowfever mosquito).